A 291-amino-acid chain; its full sequence is Ribose-phosphate pyrophosphokinase (291 aa).

ATP-binding positions include 34-36 (DGE) and 93-94 (RQ). Positions 127 and 165 each coordinate Mg(2+). The active site involves K188. D-ribose 5-phosphate-binding positions include R190, D216, and 220 to 224 (STGGT).

The protein belongs to the ribose-phosphate pyrophosphokinase family. Class III (archaeal) subfamily. As to quaternary structure, homodimer. Requires Mg(2+) as cofactor.

It is found in the cytoplasm. It carries out the reaction D-ribose 5-phosphate + ATP = 5-phospho-alpha-D-ribose 1-diphosphate + AMP + H(+). It functions in the pathway metabolic intermediate biosynthesis; 5-phospho-alpha-D-ribose 1-diphosphate biosynthesis; 5-phospho-alpha-D-ribose 1-diphosphate from D-ribose 5-phosphate (route I): step 1/1. Involved in the biosynthesis of the central metabolite phospho-alpha-D-ribosyl-1-pyrophosphate (PRPP) via the transfer of pyrophosphoryl group from ATP to 1-hydroxyl of ribose-5-phosphate (Rib-5-P). This chain is Ribose-phosphate pyrophosphokinase, found in Saccharolobus solfataricus (strain ATCC 35092 / DSM 1617 / JCM 11322 / P2) (Sulfolobus solfataricus).